Here is a 533-residue protein sequence, read N- to C-terminus: T-complex protein 1 subunit delta (533 aa).

The interval Met1–Ala24 is disordered.

It belongs to the TCP-1 chaperonin family. Heterooligomeric complex of about 850 to 900 kDa that forms two stacked rings, 12 to 16 nm in diameter.

The protein resides in the cytoplasm. Its function is as follows. Molecular chaperone; assists the folding of proteins upon ATP hydrolysis. Known to play a role, in vitro, in the folding of actin and tubulin. This Ochlerotatus triseriatus (Eastern treehole mosquito) protein is T-complex protein 1 subunit delta.